The sequence spans 159 residues: Phosphopantetheine adenylyltransferase (159 aa).

Threonine 10 provides a ligand contact to substrate. ATP contacts are provided by residues 10-11 (TF) and histidine 18. Substrate contacts are provided by lysine 42, methionine 74, and arginine 88. ATP-binding positions include 89 to 91 (GLR), glutamate 99, and 124 to 130 (WSFISSS).

This sequence belongs to the bacterial CoaD family. Homohexamer. It depends on Mg(2+) as a cofactor.

It is found in the cytoplasm. It carries out the reaction (R)-4'-phosphopantetheine + ATP + H(+) = 3'-dephospho-CoA + diphosphate. The protein operates within cofactor biosynthesis; coenzyme A biosynthesis; CoA from (R)-pantothenate: step 4/5. Its function is as follows. Reversibly transfers an adenylyl group from ATP to 4'-phosphopantetheine, yielding dephospho-CoA (dPCoA) and pyrophosphate. The polypeptide is Phosphopantetheine adenylyltransferase (Klebsiella pneumoniae (strain 342)).